The primary structure comprises 230 residues: UPF0502 protein Patl_1161 (230 aa).

It belongs to the UPF0502 family.

The polypeptide is UPF0502 protein Patl_1161 (Pseudoalteromonas atlantica (strain T6c / ATCC BAA-1087)).